The primary structure comprises 546 residues: ATP synthase subunit alpha (546 aa).

172-179 (GDRKTGKT) is an ATP binding site.

The protein belongs to the ATPase alpha/beta chains family. In terms of assembly, F-type ATPases have 2 components, CF(1) - the catalytic core - and CF(0) - the membrane proton channel. CF(1) has five subunits: alpha(3), beta(3), gamma(1), delta(1), epsilon(1). CF(0) has three main subunits: a(1), b(2) and c(9-12). The alpha and beta chains form an alternating ring which encloses part of the gamma chain. CF(1) is attached to CF(0) by a central stalk formed by the gamma and epsilon chains, while a peripheral stalk is formed by the delta and b chains.

It localises to the cell membrane. The catalysed reaction is ATP + H2O + 4 H(+)(in) = ADP + phosphate + 5 H(+)(out). In terms of biological role, produces ATP from ADP in the presence of a proton gradient across the membrane. The alpha chain is a regulatory subunit. This chain is ATP synthase subunit alpha, found in Corynebacterium efficiens (strain DSM 44549 / YS-314 / AJ 12310 / JCM 11189 / NBRC 100395).